A 337-amino-acid chain; its full sequence is Trace amine-associated receptor 5 (337 aa).

The Extracellular portion of the chain corresponds to 1-34 (MRAVFIQGAEEHPAAFCYQVNGSCPRTVHTLGIQ). Asparagine 21 carries an N-linked (GlcNAc...) asparagine glycan. Intrachain disulfides connect cysteine 24–cysteine 188 and cysteine 99–cysteine 192. Residues 35–55 (LVIYLACAAGMLIIVLGNVFV) form a helical membrane-spanning segment. Over 56-70 (AFAVSYFKALHTPTN) the chain is Cytoplasmic. Residues 71-91 (FLLLSLALADMFLGLLVLPLS) form a helical membrane-spanning segment. The Extracellular segment spans residues 92–109 (TIRSVESCWFFGDFLCRL). A helical membrane pass occupies residues 110–130 (HTYLDTLFCLTSIFHLCFISI). At 131–154 (DRHCAICDPLLYPSKFTVRVALRY) the chain is on the cytoplasmic side. Residues 155-175 (ILAGWGVPAAYTSLFLYTDVV) form a helical membrane-spanning segment. The interval 176 to 189 (ETRLSQWLEEMPCV) is extracellular Loop 2 (ECL2). Over 176-204 (ETRLSQWLEEMPCVGSCQLLLNKFWGWLN) the chain is Extracellular. A helical transmembrane segment spans residues 205–225 (FPLFFVPCLIMISLYVKIFVV). The Cytoplasmic portion of the chain corresponds to 226–253 (ATRQAQQITTLSKSLAGAAKHERKAAKT). Residues 254–274 (LGIAVGIYLLCWLPFTIDTMV) traverse the membrane as a helical segment. Over 275–284 (DSLLHFITPP) the chain is Extracellular. Residues 285–307 (LVFDIFIWFAYFNSACNPIIYVF) traverse the membrane as a helical segment. Residues 308-337 (SYQWFRKALKLTLSQKVFSPQTRTVDLYQE) are Cytoplasmic-facing.

This sequence belongs to the G-protein coupled receptor 1 family. In terms of tissue distribution, expressed almost exclusively in skeletal muscle and selected areas of the brain, such amygdala, hippocampus, caudate nucleus, thalamus and hypothalamus. Weak expression is also find in substantia nigra.

It is found in the cell membrane. In terms of biological role, olfactory receptor specific for trimethylamine, a trace amine. Also activated at lower level by dimethylethylamine. Trimethylamine is a bacterial metabolite found in some animal odors, and to humans it is a repulsive odor associated with bad breath and spoiled food. Trimethylamine-binding causes a conformation change that triggers signaling via G(s)-class of G alpha proteins (GNAL or GNAS). The polypeptide is Trace amine-associated receptor 5 (Homo sapiens (Human)).